We begin with the raw amino-acid sequence, 369 residues long: uncharacterized protein (369 aa).

A compositionally biased stretch (low complexity) spans 110 to 121; sequence ARPTDAFGAPIA. A disordered region spans residues 110 to 172; that stretch reads ARPTDAFGAP…PPPPASGGGA (63 aa). Positions 122 to 136 are enriched in pro residues; the sequence is PSEPTPASAPSPPKA.

This is an uncharacterized protein from Lymantria dispar multicapsid nuclear polyhedrosis virus (LdMNPV).